The following is a 362-amino-acid chain: DNA replication and repair protein RecF (362 aa).

30-37 (GLNAQGKS) is a binding site for ATP.

This sequence belongs to the RecF family.

The protein resides in the cytoplasm. Its function is as follows. The RecF protein is involved in DNA metabolism; it is required for DNA replication and normal SOS inducibility. RecF binds preferentially to single-stranded, linear DNA. It also seems to bind ATP. In Thermoanaerobacter sp. (strain X514), this protein is DNA replication and repair protein RecF.